Reading from the N-terminus, the 306-residue chain is Bacitracin transport ATP-binding protein BcrA (306 aa).

Residues 5–233 enclose the ABC transporter domain; sequence IKTTDLTKMY…NRKYLEFQLS (229 aa). 37–44 serves as a coordination point for ATP; the sequence is GRNGAGKT.

Belongs to the ABC transporter superfamily.

Part of the binding-protein-dependent transport system for bacitracin that confer resistance to this antibiotic. Probably responsible for energy coupling to the transport system. The protein is Bacitracin transport ATP-binding protein BcrA (bcrA) of Bacillus licheniformis.